A 174-amino-acid polypeptide reads, in one-letter code: Gamma-crystallin E (174 aa).

2 Beta/gamma crystallin 'Greek key' domains span residues 2-40 (GKITFYEDRGFQGRHYECSTDHSNLQPYFSRCNSVRVDS) and 41-83 (GCWM…RLIP). The connecting peptide stretch occupies residues 84-87 (HSSS). 2 consecutive Beta/gamma crystallin 'Greek key' domains span residues 88-128 (HRIK…HVME) and 129-171 (GYWV…RRIM).

Belongs to the beta/gamma-crystallin family. In terms of tissue distribution, detected in the superior olivary complex of the auditory hindbrain.

In terms of biological role, crystallins are the dominant structural components of the vertebrate eye lens. This is Gamma-crystallin E (Cryge) from Mus musculus (Mouse).